Reading from the N-terminus, the 176-residue chain is NAD(P)H-quinone oxidoreductase subunit 6, chloroplastic (176 aa).

5 consecutive transmembrane segments (helical) span residues 10 to 30 (FLLV…VLLT), 33 to 53 (IYSA…HIPA), 61 to 81 (AQLL…VMFM), 92 to 112 (LWTV…VSLI), and 152 to 172 (FFLP…GAIA).

The protein belongs to the complex I subunit 6 family. NDH is composed of at least 16 different subunits, 5 of which are encoded in the nucleus.

It is found in the plastid. The protein resides in the chloroplast thylakoid membrane. The catalysed reaction is a plastoquinone + NADH + (n+1) H(+)(in) = a plastoquinol + NAD(+) + n H(+)(out). The enzyme catalyses a plastoquinone + NADPH + (n+1) H(+)(in) = a plastoquinol + NADP(+) + n H(+)(out). Its function is as follows. NDH shuttles electrons from NAD(P)H:plastoquinone, via FMN and iron-sulfur (Fe-S) centers, to quinones in the photosynthetic chain and possibly in a chloroplast respiratory chain. The immediate electron acceptor for the enzyme in this species is believed to be plastoquinone. Couples the redox reaction to proton translocation, and thus conserves the redox energy in a proton gradient. This Nandina domestica (Heavenly bamboo) protein is NAD(P)H-quinone oxidoreductase subunit 6, chloroplastic (ndhG).